A 276-amino-acid polypeptide reads, in one-letter code: Elongation factor Ts, mitochondrial (276 aa).

Belongs to the EF-Ts family.

The protein resides in the mitochondrion. In terms of biological role, associates with the EF-Tu.GDP complex and induces the exchange of GDP to GTP. It remains bound to the aminoacyl-tRNA.EF-Tu.GTP complex up to the GTP hydrolysis stage on the ribosome. This chain is Elongation factor Ts, mitochondrial, found in Leishmania infantum.